The following is a 325-amino-acid chain: GMP reductase (325 aa).

The Thioimidate intermediate role is filled by Cys174. 203 to 226 (IIADGGIRTHGDIAKSVRFGATMV) serves as a coordination point for NADP(+).

The protein belongs to the IMPDH/GMPR family. GuaC type 2 subfamily.

It carries out the reaction IMP + NH4(+) + NADP(+) = GMP + NADPH + 2 H(+). Functionally, catalyzes the irreversible NADPH-dependent deamination of GMP to IMP. It functions in the conversion of nucleobase, nucleoside and nucleotide derivatives of G to A nucleotides, and in maintaining the intracellular balance of A and G nucleotides. In Enterococcus faecalis (strain ATCC 700802 / V583), this protein is GMP reductase.